Reading from the N-terminus, the 869-residue chain is MTESAIDDQRFNLTKELQRHSCRDQGKITQKDDALDFISYSSFQSSFNTDQKSANNGSTVRRSIRSIFRRAAELPRVHMGPLTYSHGINELVNKKLRKDCDLSTLCRVLQRGIRMIRMTRRRRKFYEFKLINNNGQIIWKDGSKYLELDSVKDIRIGDTASTYQEEVDPKRLRSDSKLWIAIIYKVSNKLKALHVVALNELDFNTFLSCICGLVKLRRELMESILLPDNSQFARIHWQITVSEKEEDEKKDTLSFADVKKLCDKFHIYVSTGQLLEFFQLADINHNGLLNYFEFEKFIKILKNRKEVNMIWSKFTKPPHSHLSFENFFQFLITEQHEQVDRQTAWSYFIKYREPTQLTMGQDGFTKFLKEQPYLVEVKEELYSKPLNHYFIASSHNTYLLGKQIAETPSVEGYIQVLQQGCRCVEIDIWDGENGPVVCHGFLTSAIPLKTVIRVIKKYAFITSPYPLIISLEINCNKDNQKLASLIMREVLAEQLYFVGTRTDKLPSPRELKHKILLKSKKTSEATRGLSVNEPFPSSFSSSYESANEQELRMKDDSTNSSSATNSSSMQRIKRIGLKKHADIINDVSNISGIHGIKFRNFSLPESKTIAHCFSLNERKVEYMIKDKHLKLSLDKHNRRYLMRVYPHVLRYKSSNFNPIPFWKAGVQMVATNWQTNDIGQQLNLAMFQILDHQPDGSFKSGYVLKPKKLLPVVTKAKMIPLIYEHFENGSDPVTVKIRILSTQLLPRLNDTSPSRNNTNSFVKVEFHTDDEPTMPISIDKGTRISATEASTKSSQGNGFNPIWDAEVSITLKDTDLTFIKFMVISEETQIASVCLKLNYLRMGYRHIPLFNMEGEQYIFCTLFIHTQIL.

An EF-hand domain is found at 269 to 304 (VSTGQLLEFFQLADINHNGLLNYFEFEKFIKILKNR). Ca(2+) is bound by residues Asp-282, Asn-284, Asn-286, and Glu-293. The PI-PLC X-box domain occupies 382-520 (YSKPLNHYFI…LKHKILLKSK (139 aa)). Residues His-395 and His-439 contribute to the active site. Positions 518 and 520 each coordinate substrate. Residues 546-571 (ANEQELRMKDDSTNSSSATNSSSMQR) are disordered. A compositionally biased stretch (low complexity) spans 558 to 568 (TNSSSATNSSS). One can recognise a PI-PLC Y-box domain in the interval 590-709 (ISGIHGIKFR…SGYVLKPKKL (120 aa)). Substrate-binding residues include Ser-614 and Arg-643. The 150-residue stretch at 713 to 862 (VTKAKMIPLI…EGEQYIFCTL (150 aa)) folds into the C2 domain.

Interacts with SGD1. Requires Ca(2+) as cofactor.

The catalysed reaction is a 1,2-diacyl-sn-glycero-3-phospho-(1D-myo-inositol-4,5-bisphosphate) + H2O = 1D-myo-inositol 1,4,5-trisphosphate + a 1,2-diacyl-sn-glycerol + H(+). The production of the second messenger molecules diacylglycerol (DAG) and inositol 1,4,5-trisphosphate (IP3) is mediated by activated phosphatidylinositol-specific phospholipase C enzymes. Required for cell growth, osmoresistance and expression of GPD1. This chain is 1-phosphatidylinositol 4,5-bisphosphate phosphodiesterase 1 (PLC1), found in Saccharomyces cerevisiae (strain ATCC 204508 / S288c) (Baker's yeast).